A 427-amino-acid polypeptide reads, in one-letter code: 3-phosphoshikimate 1-carboxyvinyltransferase (427 aa).

The 3-phosphoshikimate site is built by Lys20, Ser21, and Arg25. Lys20 lines the phosphoenolpyruvate pocket. Phosphoenolpyruvate is bound by residues Gly92 and Arg120. Residues Ser166, Gln168, Asp312, and Lys339 each coordinate 3-phosphoshikimate. Gln168 contacts phosphoenolpyruvate. Residue Asp312 is the Proton acceptor of the active site. 2 residues coordinate phosphoenolpyruvate: Arg343 and Arg385.

The protein belongs to the EPSP synthase family. In terms of assembly, monomer.

It localises to the cytoplasm. The enzyme catalyses 3-phosphoshikimate + phosphoenolpyruvate = 5-O-(1-carboxyvinyl)-3-phosphoshikimate + phosphate. It participates in metabolic intermediate biosynthesis; chorismate biosynthesis; chorismate from D-erythrose 4-phosphate and phosphoenolpyruvate: step 6/7. Its function is as follows. Catalyzes the transfer of the enolpyruvyl moiety of phosphoenolpyruvate (PEP) to the 5-hydroxyl of shikimate-3-phosphate (S3P) to produce enolpyruvyl shikimate-3-phosphate and inorganic phosphate. The protein is 3-phosphoshikimate 1-carboxyvinyltransferase of Streptococcus gordonii (strain Challis / ATCC 35105 / BCRC 15272 / CH1 / DL1 / V288).